Consider the following 998-residue polypeptide: MNKKDQLQRLIDKYKSDIDYYRSARYNETQLRTDFLDQLFLILGWDITNAAGKPTNEREVLVEEGLKARAGENTKKPDYTFRLFSERKFFLEAKKPSVDISTTIEPALQVRRYGFTAKLKISVLSNFEYTAIYDCSNQVKETDSVANSRIKLYHFTELVDKFDEINNLIGRESVYTGHFDNEWSEIENKILRFSVDDLFLKQINDWRLLLANEFLQIKNELPEEKLNDLVQNYINSIVFLRVCEDRDLEEYETLYHFAQDKDFQSLVKKLKSSDKKYNSGLFSLEYIDELLSNANSCIWSIIEQLYFPQSTYSFSVFSSDILGNIYEIFLSEKVRIDELGNVKIQPKEEHIDRDVVTTPTHIVKEIIRNTVVEYCKGKSDIEILNSKFADIACGSGAFIIEAFQFIQDILIDYYIQNDKSKLQQISEHTYKLKFEVKREILCKCIYGIDKDYNATKACTFGLLLKLLEGETTETIGKDTPILPALDTNILFGNSLIDSGDKVKQEDIFSINPFDLTNYQFDVIVGNPPYMATEHMNQLTPKELDIYKRKYKSAYKQFDKYFLFIERSIQILKEYGYLGYILPSRFIKVDAGKKLRKFLSENKYLSKLISFGSHQVFKNKTTYTCLLFLNKENHDNFSFYEVKDFKKWLTREDKYLLSSTYQTSSLDSDTWVLEKKINDILKLMFSKSEQLGNIVGKSNVANGIQTSANKYYIHKEIKSENGFIYFEYDGIEYHIEKELTRPYFETNRSGDDSFYTYKDVEPNSFVVYPYKKVGERIQFIEYDELKRQYPKLFEFLQVVKVHLNDKKRSIKPDPTGPNEWYRYGRSQALENCDVDQKLIVGILSNGYKYSIDNHRTFVSSGGTAGYSIINIPNNVRYSIYYIQAILTSKYLEWFASIYGDIFRGRFVARGTKVQTRMPIPTIDFDDPKQKEIHDTISSKQQYLNKLYSQTQKSADRDKIIFERQFEQEKIQMDYLIKNLFDLGDLDSEIPTVEDLYKNL.

In the C-terminal section; belongs to the N(4)/N(6)-methyltransferase family. In terms of assembly, monomer.

The enzyme catalyses Endonucleolytic cleavage of DNA to give specific double-stranded fragments with terminal 5'-phosphates.. The catalysed reaction is a 2'-deoxyadenosine in DNA + S-adenosyl-L-methionine = an N(6)-methyl-2'-deoxyadenosine in DNA + S-adenosyl-L-homocysteine + H(+). With respect to regulation, mg(2+) is absolutely required for DNA restriction. Its function is as follows. An E, G and S subtype restriction enzyme that recognizes the (non-palindromic) double-stranded sequence 5'-CTGAAG-3' and cleaves respectively 22 bases after C-1 and 14 bases before C'-1; cleavage of lambda DNA is never complete. Also acts as a methylase that causes specific methylation on A-5 in 5'-CTGAAG-3', the other strand is methylated by the M.Eco57I methylase. This is Type II restriction enzyme and methyltransferase RM.Eco57I from Escherichia coli.